We begin with the raw amino-acid sequence, 427 residues long: MECFKRLTTVFFTVKLVQYLLVYFAPGQFDTSTPLFLEKYQPLQPEKWYHKLLSWDSVYFVKNGLQAVTHTNAYGYVSLPEYEHEWMFSPFVWSQTLKTAGGATLRNWAAPIDTLLVRATLLNLVLHYVSVWLLYALTLRTFPKNRELAYKTSLLFILSSAAGFLLAPYSEPLSFAFSFLGMLLRMLAVEHNVYGGITLAWYNWLPYTLSGICFSVAAANRPNCVLLGVYYIYDVLKLVRQRNWVRAVLFPCIAGSMMLGIFAYMHYYLPSVVFCPERESWCKHSLPWIHIPYKSFYSFVQGYYWRNGFLNYWTWNNVPNFLFALPNLVILWYSTVYFSYQYPLESIRPLVYITRALLLIITFFAHVQIINRISSFIPLHLWYLSDRMIKTTGEAKGDDRLVYLYVNWLILWIPLQTVLFACFLPPA.

The next 8 membrane-spanning stretches (helical) occupy residues 7–27 (LTTV…FAPG), 119–139 (ATLL…ALTL), 164–184 (FLLA…GMLL), 197–217 (ITLA…FSVA), 247–267 (AVLF…YMHY), 318–338 (VPNF…TVYF), 350–370 (LVYI…VQII), and 404–424 (LYVN…ACFL).

Belongs to the PIGV family.

It is found in the endoplasmic reticulum membrane. It functions in the pathway glycolipid biosynthesis; glycosylphosphatidylinositol-anchor biosynthesis. Functionally, mannosyltransferase involved in glycosylphosphatidylinositol-anchor biosynthesis. Transfers the second mannose to the glycosylphosphatidylinositol during GPI precursor assembly. The chain is GPI mannosyltransferase 2 (GPI18) from Eremothecium gossypii (strain ATCC 10895 / CBS 109.51 / FGSC 9923 / NRRL Y-1056) (Yeast).